Here is a 243-residue protein sequence, read N- to C-terminus: Uridylate kinase (243 aa).

An ATP-binding site is contributed by 15–18 (KMSG). Residue Gly-57 coordinates UMP. Residues Gly-58 and Arg-62 each contribute to the ATP site. Residues Asp-77 and 138 to 145 (TGNPLVTT) contribute to the UMP site. The ATP site is built by Thr-165, Asn-166, Tyr-171, and Asp-174.

The protein belongs to the UMP kinase family. Homohexamer.

The protein resides in the cytoplasm. It carries out the reaction UMP + ATP = UDP + ADP. It functions in the pathway pyrimidine metabolism; CTP biosynthesis via de novo pathway; UDP from UMP (UMPK route): step 1/1. With respect to regulation, inhibited by UTP. Its function is as follows. Catalyzes the reversible phosphorylation of UMP to UDP. This chain is Uridylate kinase, found in Coxiella burnetii (strain RSA 493 / Nine Mile phase I).